The chain runs to 173 residues: Enhancer of split mdelta protein (173 aa).

In terms of domain architecture, bHLH spans 15–72; the sequence is YRKVTKPLLERKRRARMNLYLDELKDLIVDTMDAQGEQVSKLEKADILELTVNYLKAQ. An Orange domain is found at 93-126; sequence FRAGYTQAAYEVSHIFSTVPGLDLKFGTHLMKQL. A disordered region spans residues 147–173; the sequence is VNLADQKRSKSPREEDIHHGEEVWRPW. Residues 151–173 show a composition bias toward basic and acidic residues; the sequence is DQKRSKSPREEDIHHGEEVWRPW. The short motif at 170 to 173 is the WRPW motif element; the sequence is WRPW.

In terms of assembly, transcription repression requires formation of a complex with a corepressor protein (Groucho).

It localises to the nucleus. Functionally, transcriptional repressor of genes that require a bHLH protein for their transcription. May serve as a transcriptional regulator of the Achaete-scute complex (AS-C) genes. Contributes to the neural-epidermal lineage decision during early neurogenesis. As part of the Notch signaling pathway, required to maintain the self-renewal and identity of type II neuroblasts by regulating the expression of the transcriptional repressor erm. This chain is Enhancer of split mdelta protein, found in Drosophila melanogaster (Fruit fly).